Here is a 483-residue protein sequence, read N- to C-terminus: Trigger factor (483 aa).

One can recognise a PPIase FKBP-type domain in the interval 162-243; it reads GDYVSLDLSA…VRGVKEKELP (82 aa). Positions 459–483 are disordered; sequence AVAPGDGDATVEPVEPVEAETDGNG. A compositionally biased stretch (acidic residues) spans 473 to 483; sequence EPVEAETDGNG.

It belongs to the FKBP-type PPIase family. Tig subfamily.

It is found in the cytoplasm. It catalyses the reaction [protein]-peptidylproline (omega=180) = [protein]-peptidylproline (omega=0). Functionally, involved in protein export. Acts as a chaperone by maintaining the newly synthesized protein in an open conformation. Functions as a peptidyl-prolyl cis-trans isomerase. This Frankia casuarinae (strain DSM 45818 / CECT 9043 / HFP020203 / CcI3) protein is Trigger factor.